The following is a 423-amino-acid chain: Glycine amidinotransferase, mitochondrial (423 aa).

The transit peptide at 1 to 43 directs the protein to the mitochondrion; it reads MLRVRCLRGGSRGAEAVHYIGSRLGRTLTGWVQRTFQSTQAAT. A disordered region spans residues 43–63; it reads TASSRNSFAADDKATEPLPKD. Residues serine 46 and serine 49 each carry the phosphoserine modification. Basic and acidic residues predominate over residues 52–61; it reads ADDKATEPLP. Position 170 (aspartate 170) interacts with arginine. Catalysis depends on residues aspartate 254 and histidine 303. Residues aspartate 305, arginine 322, serine 354, and serine 355 each coordinate arginine. Lysine 385 is subject to N6-acetyllysine. Cysteine 407 functions as the Amidino-cysteine intermediate in the catalytic mechanism.

It belongs to the amidinotransferase family. In terms of assembly, homodimer.

The protein resides in the mitochondrion inner membrane. The catalysed reaction is L-arginine + glycine = guanidinoacetate + L-ornithine. It carries out the reaction 4-aminobutanoate + L-arginine = 4-guanidinobutanoate + L-ornithine. The enzyme catalyses beta-alanine + L-arginine = 3-guanidinopropanoate + L-ornithine. It catalyses the reaction taurine + L-arginine = taurocyamine + L-ornithine. It participates in amine and polyamine biosynthesis; creatine biosynthesis; creatine from L-arginine and glycine: step 1/2. Functionally, transamidinase that catalyzes the transfer of the amidino group of L-arginine onto the amino moiety of acceptor metabolites such as glycine, beta-alanine, gamma-aminobutyric acid (GABA) and taurine yielding the corresponding guanidine derivatives. Catalyzes the rate-limiting step of creatine biosynthesis, namely the transfer of the amidino group from L-arginine to glycine to generate guanidinoacetate, which is then methylated by GAMT to form creatine. Provides creatine as a source for ATP generation in tissues with high energy demands, in particular skeletal muscle, heart and brain. This chain is Glycine amidinotransferase, mitochondrial (GATM), found in Macaca fascicularis (Crab-eating macaque).